The chain runs to 375 residues: Dihydroorotate dehydrogenase (quinone) (375 aa).

FMN-binding positions include 78–82 (AGLDK) and Thr-102. Lys-82 contacts substrate. Residue 127–131 (NRMGF) participates in substrate binding. The FMN site is built by Asn-159 and Asn-192. Asn-192 is a substrate binding site. The active-site Nucleophile is Ser-195. Asn-197 is a binding site for substrate. FMN is bound by residues Lys-230 and Thr-258. Position 259-260 (259-260 (NT)) interacts with substrate. Residues Gly-288, Gly-317, and 338–339 (YT) each bind FMN.

It belongs to the dihydroorotate dehydrogenase family. Type 2 subfamily. In terms of assembly, monomer. Requires FMN as cofactor.

Its subcellular location is the cell membrane. The enzyme catalyses (S)-dihydroorotate + a quinone = orotate + a quinol. Its pathway is pyrimidine metabolism; UMP biosynthesis via de novo pathway; orotate from (S)-dihydroorotate (quinone route): step 1/1. Its function is as follows. Catalyzes the conversion of dihydroorotate to orotate with quinone as electron acceptor. The protein is Dihydroorotate dehydrogenase (quinone) of Cyanothece sp. (strain PCC 7425 / ATCC 29141).